The sequence spans 179 residues: Ribosome maturation factor RimM (179 aa).

A PRC barrel domain is found at 100-176 (HGEYHLTELI…FILLTPPSGL (77 aa)).

The protein belongs to the RimM family. As to quaternary structure, binds ribosomal protein uS19.

Its subcellular location is the cytoplasm. In terms of biological role, an accessory protein needed during the final step in the assembly of 30S ribosomal subunit, possibly for assembly of the head region. Essential for efficient processing of 16S rRNA. May be needed both before and after RbfA during the maturation of 16S rRNA. It has affinity for free ribosomal 30S subunits but not for 70S ribosomes. This chain is Ribosome maturation factor RimM, found in Prochlorococcus marinus subsp. pastoris (strain CCMP1986 / NIES-2087 / MED4).